The sequence spans 386 residues: Succinate--CoA ligase [ADP-forming] subunit beta (386 aa).

One can recognise an ATP-grasp domain in the interval 9 to 244 (KEILRKYGVP…HDEEDPLETR (236 aa)). Residues Lys46, 53-55 (GRG), Glu99, Cys102, and Glu107 each bind ATP. Mg(2+) contacts are provided by Asn199 and Asp213. Substrate-binding positions include Asn264 and 321–323 (GIM).

Belongs to the succinate/malate CoA ligase beta subunit family. Heterotetramer of two alpha and two beta subunits. Requires Mg(2+) as cofactor.

The enzyme catalyses succinate + ATP + CoA = succinyl-CoA + ADP + phosphate. It carries out the reaction GTP + succinate + CoA = succinyl-CoA + GDP + phosphate. It participates in carbohydrate metabolism; tricarboxylic acid cycle; succinate from succinyl-CoA (ligase route): step 1/1. Its function is as follows. Succinyl-CoA synthetase functions in the citric acid cycle (TCA), coupling the hydrolysis of succinyl-CoA to the synthesis of either ATP or GTP and thus represents the only step of substrate-level phosphorylation in the TCA. The beta subunit provides nucleotide specificity of the enzyme and binds the substrate succinate, while the binding sites for coenzyme A and phosphate are found in the alpha subunit. In Rickettsia conorii (strain ATCC VR-613 / Malish 7), this protein is Succinate--CoA ligase [ADP-forming] subunit beta.